A 503-amino-acid chain; its full sequence is Probable cytosol aminopeptidase (503 aa).

The Mn(2+) site is built by Lys270 and Asp275. Residue Lys282 is part of the active site. 3 residues coordinate Mn(2+): Asp293, Asp352, and Glu354. Arg356 is a catalytic residue.

The protein belongs to the peptidase M17 family. Mn(2+) is required as a cofactor.

Its subcellular location is the cytoplasm. It catalyses the reaction Release of an N-terminal amino acid, Xaa-|-Yaa-, in which Xaa is preferably Leu, but may be other amino acids including Pro although not Arg or Lys, and Yaa may be Pro. Amino acid amides and methyl esters are also readily hydrolyzed, but rates on arylamides are exceedingly low.. The catalysed reaction is Release of an N-terminal amino acid, preferentially leucine, but not glutamic or aspartic acids.. In terms of biological role, presumably involved in the processing and regular turnover of intracellular proteins. Catalyzes the removal of unsubstituted N-terminal amino acids from various peptides. The protein is Probable cytosol aminopeptidase of Salmonella agona (strain SL483).